The primary structure comprises 427 residues: Glutamate-1-semialdehyde 2,1-aminomutase (427 aa).

At lysine 266 the chain carries N6-(pyridoxal phosphate)lysine.

The protein belongs to the class-III pyridoxal-phosphate-dependent aminotransferase family. HemL subfamily. Homodimer. The cofactor is pyridoxal 5'-phosphate.

The protein resides in the cytoplasm. It catalyses the reaction (S)-4-amino-5-oxopentanoate = 5-aminolevulinate. Its pathway is porphyrin-containing compound metabolism; protoporphyrin-IX biosynthesis; 5-aminolevulinate from L-glutamyl-tRNA(Glu): step 2/2. This chain is Glutamate-1-semialdehyde 2,1-aminomutase, found in Dechloromonas aromatica (strain RCB).